Consider the following 353-residue polypeptide: Photosystem II protein D1 (353 aa).

The residue at position 2 (Thr-2) is an N-acetylthreonine. Position 2 is a phosphothreonine (Thr-2). 3 helical membrane-spanning segments follow: residues 29–46 (YIGW…TATS), 118–133 (HFLL…EWEL), and 142–156 (WIAI…AATA). His-118 contacts chlorophyll a. Tyr-126 contributes to the pheophytin a binding site. [CaMn4O5] cluster-binding residues include Asp-170 and Glu-189. A helical transmembrane segment spans residues 197-218 (FHMLGVAGVFGGSLFSAMHGSL). His-198 provides a ligand contact to chlorophyll a. A quinone is bound by residues His-215 and 264–265 (SF). Position 215 (His-215) interacts with Fe cation. A Fe cation-binding site is contributed by His-272. A helical transmembrane segment spans residues 274-288 (FLAAWPVIGIWFTAL). [CaMn4O5] cluster-binding residues include His-332, Glu-333, Asp-342, and Ala-344. Residues 345 to 353 (TFEVSATNA) constitute a propeptide that is removed on maturation.

This sequence belongs to the reaction center PufL/M/PsbA/D family. As to quaternary structure, PSII is composed of 1 copy each of membrane proteins PsbA, PsbB, PsbC, PsbD, PsbE, PsbF, PsbH, PsbI, PsbJ, PsbK, PsbL, PsbM, PsbT, PsbX, PsbY, PsbZ, Psb30/Ycf12, at least 3 peripheral proteins of the oxygen-evolving complex and a large number of cofactors. It forms dimeric complexes. It depends on The D1/D2 heterodimer binds P680, chlorophylls that are the primary electron donor of PSII, and subsequent electron acceptors. It shares a non-heme iron and each subunit binds pheophytin, quinone, additional chlorophylls, carotenoids and lipids. D1 provides most of the ligands for the Mn4-Ca-O5 cluster of the oxygen-evolving complex (OEC). There is also a Cl(-1) ion associated with D1 and D2, which is required for oxygen evolution. The PSII complex binds additional chlorophylls, carotenoids and specific lipids. as a cofactor. Tyr-161 forms a radical intermediate that is referred to as redox-active TyrZ, YZ or Y-Z. In terms of processing, C-terminally processed by CTPA; processing is essential to allow assembly of the oxygen-evolving complex and thus photosynthetic growth.

It localises to the plastid membrane. The enzyme catalyses 2 a plastoquinone + 4 hnu + 2 H2O = 2 a plastoquinol + O2. Functionally, photosystem II (PSII) is a light-driven water:plastoquinone oxidoreductase that uses light energy to abstract electrons from H(2)O, generating O(2) and a proton gradient subsequently used for ATP formation. It consists of a core antenna complex that captures photons, and an electron transfer chain that converts photonic excitation into a charge separation. The D1/D2 (PsbA/PsbD) reaction center heterodimer binds P680, the primary electron donor of PSII as well as several subsequent electron acceptors. The chain is Photosystem II protein D1 from Cuscuta gronovii (Common dodder).